The sequence spans 83 residues: Translational regulator CsrA (83 aa).

It belongs to the CsrA/RsmA family. Homodimer; the beta-strands of each monomer intercalate to form a hydrophobic core, while the alpha-helices form wings that extend away from the core.

The protein resides in the cytoplasm. In terms of biological role, a translational regulator that binds mRNA to regulate translation initiation and/or mRNA stability. Usually binds in the 5'-UTR at or near the Shine-Dalgarno sequence preventing ribosome-binding, thus repressing translation. Its main target seems to be the major flagellin gene, while its function is anatagonized by FliW. In Nocardioides sp. (strain ATCC BAA-499 / JS614), this protein is Translational regulator CsrA.